Consider the following 723-residue polypeptide: Catalase-peroxidase (723 aa).

The N-terminal stretch at 1 to 29 (MDGNDLVENKCPVMHGGITVAGHSNTAWW) is a signal peptide. Residues 97–225 (WHSAGSYRLA…LAAVQMGLIY (129 aa)) constitute a cross-link (tryptophyl-tyrosyl-methioninium (Trp-Tyr) (with M-251)). Histidine 98 acts as the Proton acceptor in catalysis. A cross-link (tryptophyl-tyrosyl-methioninium (Tyr-Met) (with W-97)) is located at residues 225–251 (YVNPEGVNGKSDPLKSAAQVRETFARM). Histidine 266 contributes to the heme b binding site.

Belongs to the peroxidase family. Peroxidase/catalase subfamily. In terms of assembly, homodimer or homotetramer. Requires heme b as cofactor. Formation of the three residue Trp-Tyr-Met cross-link is important for the catalase, but not the peroxidase activity of the enzyme.

It carries out the reaction H2O2 + AH2 = A + 2 H2O. It catalyses the reaction 2 H2O2 = O2 + 2 H2O. Functionally, bifunctional enzyme with both catalase and broad-spectrum peroxidase activity. In Hyphomonas neptunium (strain ATCC 15444), this protein is Catalase-peroxidase.